We begin with the raw amino-acid sequence, 371 residues long: Barbiturase 2 (371 aa).

The segment at 1–104 (MTRPIEVRKV…TIFAYAPEGR (104 aa)) is RU A. Substrate is bound by residues Arg-53 and 83–84 (SG). Residues 112-247 (RVTVGYAMSE…AQIVVVGNAR (136 aa)) are RU B. Residue Lys-162 is part of the active site. Residues Asn-194 and 230 to 231 (SS) each bind substrate. The Nucleophile role is filled by Ser-230. An RU C region spans residues 253–371 (FRVGHSIMKD…PVIAIVDLEA (119 aa)). Glu-303 serves as a coordination point for Mg(2+). Residues Lys-330 and 349–350 (SV) contribute to the substrate site. The Mg(2+) site is built by Ala-352, Gln-355, Gly-356, Pro-357, and Gly-360.

This sequence belongs to the cyclic amide hydrolase (CyAH) family. As to quaternary structure, homotetramer.

The enzyme catalyses barbiturate + H2O = 3-oxo-3-ureidopropanoate. It functions in the pathway pyrimidine metabolism; uracil degradation via oxidative pathway; malonate and urea from uracil: step 2/3. Responsible for the hydrolysis of barbituric acid (2,4,6-trihydroxy-1,3-pyrimidine), an intermediate in the oxidative catabolism of pyrimidines. Catalyzes the hydrolytic opening of the pyrimidine ring of barbituric acid to yield ureidomalonic acid. Can also use cyanuric acid as a substrate, albeit with lower efficiency. The polypeptide is Barbiturase 2 (Nocardioides sp. (strain ATCC BAA-499 / JS614)).